We begin with the raw amino-acid sequence, 428 residues long: MLDIRLFRNEPVTVKSKIELRGDDSKVVDEILELDEQRRKLISATEEMKARRNKVSEEIALKKRNKENADDVIAEMRTLGDDIKEKDSQLNEIDNKMTGILCRIPNLISDDVPQGESDEDNVEVKKWGTPREFSFEPKAHWDIVEELKMADFDRAAKVSGARFVYLTNEGAQLERALMNYMITKHTTQHGYTEMMVPQLVNADTMYGTGQLPKFEEDLFKVEKEGLYTIPTAEVPLTNFYRNEIIQPGVLPEKFTGQSACFRSEAGSAGRDTRGLIRLHQFDKVEMVRFEQPEDSWNALEEMTTNAEAILEELGLPYRRVILCTGDIGFSASKTYDLEVWLPSYNDYKEISSCSNCTDFQARRANIRFKRDKAAKPELAHTLNGSGLAVGRTFAAIVENYQNEDGTVTIPEALVPFMGGKTQISKPVK.

231–233 lines the L-serine pocket; sequence TAE. 262–264 is an ATP binding site; it reads RSE. Glu-285 is a binding site for L-serine. 349 to 352 lines the ATP pocket; that stretch reads EISS. Ser-385 lines the L-serine pocket.

It belongs to the class-II aminoacyl-tRNA synthetase family. Type-1 seryl-tRNA synthetase subfamily. In terms of assembly, homodimer. The tRNA molecule binds across the dimer.

Its subcellular location is the cytoplasm. It carries out the reaction tRNA(Ser) + L-serine + ATP = L-seryl-tRNA(Ser) + AMP + diphosphate + H(+). It catalyses the reaction tRNA(Sec) + L-serine + ATP = L-seryl-tRNA(Sec) + AMP + diphosphate + H(+). It functions in the pathway aminoacyl-tRNA biosynthesis; selenocysteinyl-tRNA(Sec) biosynthesis; L-seryl-tRNA(Sec) from L-serine and tRNA(Sec): step 1/1. In terms of biological role, catalyzes the attachment of serine to tRNA(Ser). Is also able to aminoacylate tRNA(Sec) with serine, to form the misacylated tRNA L-seryl-tRNA(Sec), which will be further converted into selenocysteinyl-tRNA(Sec). This chain is Serine--tRNA ligase, found in Staphylococcus aureus (strain MSSA476).